The following is a 103-amino-acid chain: Viscotoxin-B (103 aa).

The N-terminal stretch at 1-6 (FRNVES) is a signal peptide. Cystine bridges form between cysteine 9/cysteine 46, cysteine 10/cysteine 38, and cysteine 22/cysteine 32. Positions 53 to 103 (FYCTLGCQSSKCASITTPPNSEVDAEAVRCKAACSNLCDFGVTTNQEIQDD) are cleaved as a propeptide — acidic domain.

This sequence belongs to the plant thionin (TC 1.C.44) family.

Its subcellular location is the secreted. In terms of biological role, thionins are small plant proteins which are toxic to animal cells. They seem to exert their toxic effect at the level of the cell membrane. Their precise function is not known. The protein is Viscotoxin-B (THI2.2) of Viscum album (European mistletoe).